The primary structure comprises 112 residues: Colipase (112 aa).

An N-terminal signal peptide occupies residues 1–17 (MEKVLALLLVTLTVAYA). The propeptide at 18–22 (VPDPR) is enterostatin, activation peptide. Cystine bridges form between Cys34-Cys45, Cys40-Cys56, Cys44-Cys78, Cys66-Cys86, and Cys80-Cys104.

This sequence belongs to the colipase family. As to quaternary structure, forms a 1:1 stoichiometric complex with pancreatic lipase. Expressed by the pancreas.

It localises to the secreted. Its function is as follows. Colipase is a cofactor of pancreatic lipase. It allows the lipase to anchor itself to the lipid-water interface. Without colipase the enzyme is washed off by bile salts, which have an inhibitory effect on the lipase. Enterostatin has a biological activity as a satiety signal. This Sus scrofa (Pig) protein is Colipase (CLPS).